Here is a 373-residue protein sequence, read N- to C-terminus: Putative aminopeptidase SgcX (373 aa).

Residues H67 and D180 each contribute to the a divalent metal cation site. The active-site Proton acceptor is E212. Residues E213, D235, and H329 each coordinate a divalent metal cation.

This sequence belongs to the peptidase M42 family. A divalent metal cation is required as a cofactor.

The sequence is that of Putative aminopeptidase SgcX (sgcX) from Escherichia coli (strain K12).